The primary structure comprises 114 residues: T-cell leukemia/lymphoma protein 1A (114 aa).

This sequence belongs to the TCL1 family. In terms of assembly, homodimer. Interacts with AKT1, AKT2 and AKT3 (via PH domain). Interacts with PNPT1; the interaction has no effect on PNPT1 exonuclease activity. In terms of tissue distribution, restricted in the T-cell lineage to immature thymocytes and activated peripheral lymphocytes. Preferentially expressed early in T- and B-lymphocyte differentiation.

It is found in the cytoplasm. Its subcellular location is the nucleus. The protein localises to the microsome. It localises to the endoplasmic reticulum. Functionally, enhances the phosphorylation and activation of AKT1, AKT2 and AKT3. Promotes nuclear translocation of AKT1. Enhances cell proliferation, stabilizes mitochondrial membrane potential and promotes cell survival. The polypeptide is T-cell leukemia/lymphoma protein 1A (TCL1A) (Homo sapiens (Human)).